The primary structure comprises 131 residues: Torsin-1A-interacting protein 2, isoform IFRG15 (131 aa).

The sequence is that of Torsin-1A-interacting protein 2, isoform IFRG15 (TOR1AIP2) from Homo sapiens (Human).